Consider the following 300-residue polypeptide: 33 kDa chaperonin (300 aa).

2 cysteine pairs are disulfide-bonded: cysteine 235-cysteine 237 and cysteine 269-cysteine 272.

This sequence belongs to the HSP33 family. Post-translationally, under oxidizing conditions two disulfide bonds are formed involving the reactive cysteines. Under reducing conditions zinc is bound to the reactive cysteines and the protein is inactive.

It localises to the cytoplasm. Redox regulated molecular chaperone. Protects both thermally unfolding and oxidatively damaged proteins from irreversible aggregation. Plays an important role in the bacterial defense system toward oxidative stress. The sequence is that of 33 kDa chaperonin from Pseudomonas syringae pv. syringae (strain B728a).